A 158-amino-acid polypeptide reads, in one-letter code: UPAR/Ly6 domain-containing protein crim (158 aa).

The signal sequence occupies residues 1–22 (MHYHTNLIAALLLAALIHEGSA). At 23-136 (IWCYRCTSAT…FCFLDHRCNG (114 aa)) the chain is on the extracellular side. N107 carries N-linked (GlcNAc...) asparagine glycosylation. The GPI-anchor amidated asparagine moiety is linked to residue N135. A propeptide spans 136 to 158 (GASGLQTSAVIGLLTLIPALLLR) (removed in mature form). Residues 137 to 157 (ASGLQTSAVIGLLTLIPALLL) form a helical membrane-spanning segment. A topological domain (cytoplasmic) is located at residue R158.

This sequence belongs to the quiver family.

It is found in the membrane. Its function is as follows. Required for septate junction assembly possibly by organizing the preassembly and transport of septate junction proteins. Involved in epithelial cell septate junction-mediated paracellular barrier functions of trachea, hindgut and salivary gland. This Drosophila melanogaster (Fruit fly) protein is UPAR/Ly6 domain-containing protein crim.